The primary structure comprises 255 residues: Pyridoxine 5'-phosphate synthase (255 aa).

The 3-amino-2-oxopropyl phosphate site is built by N8 and R19. H44 functions as the Proton acceptor in the catalytic mechanism. 2 residues coordinate 1-deoxy-D-xylulose 5-phosphate: R46 and H51. The Proton acceptor role is filled by E74. Residue T111 coordinates 1-deoxy-D-xylulose 5-phosphate. Residue H202 is the Proton donor of the active site. Residues D203 and 225–226 (GH) each bind 3-amino-2-oxopropyl phosphate.

This sequence belongs to the PNP synthase family. Homooctamer; tetramer of dimers.

It is found in the cytoplasm. It catalyses the reaction 3-amino-2-oxopropyl phosphate + 1-deoxy-D-xylulose 5-phosphate = pyridoxine 5'-phosphate + phosphate + 2 H2O + H(+). It functions in the pathway cofactor biosynthesis; pyridoxine 5'-phosphate biosynthesis; pyridoxine 5'-phosphate from D-erythrose 4-phosphate: step 5/5. Functionally, catalyzes the complicated ring closure reaction between the two acyclic compounds 1-deoxy-D-xylulose-5-phosphate (DXP) and 3-amino-2-oxopropyl phosphate (1-amino-acetone-3-phosphate or AAP) to form pyridoxine 5'-phosphate (PNP) and inorganic phosphate. This is Pyridoxine 5'-phosphate synthase from Xanthomonas oryzae pv. oryzae (strain MAFF 311018).